Reading from the N-terminus, the 722-residue chain is Bifunctional UDP-N-acetylglucosamine 2-epimerase/N-acetylmannosamine kinase (722 aa).

UDP is bound by residues R19, S23, R113, H220, and N253. CMP-N-acetyl-beta-neuraminate is bound by residues K259, E271, K280, and H281. 5 residues coordinate UDP: V282, S301, S302, E307, and R321. The segment at 406-722 (TLSALAVDLG…VLDYTTRRIH (317 aa)) is N-acetylmannosamine kinase. D413 contacts Mg(2+). Position 416 (G416) interacts with an N-acyl-D-mannosamine 6-phosphate. Residues T417, N418, and R420 each coordinate ADP. Residues G476, R477, T489, N516, D517, and G545 each contribute to the an N-acyl-D-mannosamine 6-phosphate site. 5 residues coordinate an N-acyl-D-mannosamine: G476, R477, T489, N516, and D517. The active site involves D517. Residues E566 and H569 each contribute to the an N-acyl-D-mannosamine site. H569 lines the an N-acyl-D-mannosamine 6-phosphate pocket. Residues H569, C579, C581, and C586 each coordinate Zn(2+). Position 588 (E588) interacts with an N-acyl-D-mannosamine 6-phosphate. E588 serves as a coordination point for an N-acyl-D-mannosamine.

In the N-terminal section; belongs to the UDP-N-acetylglucosamine 2-epimerase family. It in the C-terminal section; belongs to the ROK (NagC/XylR) family. In terms of assembly, homodimer. Homotetramer. Homohexamer. The hexameric form exhibits both enzyme activities, whereas the dimeric form only catalyzes the phosphorylation of N-acyl-D-mannosamine. Post-translationally, phosphorylated. Phosphorylation by PKC activates the UDP-N-acetylglucosamine 2-epimerase activity. In terms of tissue distribution, widely expressed. Highest expression is observed in liver.

It localises to the cytoplasm. The protein localises to the cytosol. The enzyme catalyses UDP-N-acetyl-alpha-D-glucosamine + H2O = aldehydo-N-acetyl-D-mannosamine + UDP + H(+). The catalysed reaction is an N-acyl-D-mannosamine + ATP = an N-acyl-D-mannosamine 6-phosphate + ADP + H(+). The protein operates within amino-sugar metabolism; N-acetylneuraminate biosynthesis. Its activity is regulated as follows. The UDP-N-acetylglucosamine 2-epimerase activity, in contrast to the N-acetylmannosamine kinase activity, exhibits allosteric regulation by cytidine monophosphate-N-acetylneuraminic acid (CMP-Neu5Ac), the end product of neuraminic acid biosynthesis. Moreover, the activity is contingent upon the oligomeric state of the enzyme. The monomeric form is inactive, while the dimeric form selectively catalyzes the phosphorylation of N-acetylmannosamine. The hexameric form, on the other hand, demonstrates full proficiency in both enzyme activities. Furthermore, the UDP-N-acetylglucosamine 2-epimerase activity is increased by PKC-mediated phosphorylation. Bifunctional enzyme that possesses both UDP-N-acetylglucosamine 2-epimerase and N-acetylmannosamine kinase activities, and serves as the initiator of the biosynthetic pathway leading to the production of N-acetylneuraminic acid (NeuAc), a critical precursor in the synthesis of sialic acids. By catalyzing this pivotal and rate-limiting step in sialic acid biosynthesis, this enzyme assumes a pivotal role in governing the regulation of cell surface sialylation. Sialic acids represent a category of negatively charged sugars that reside on the surface of cells as terminal components of glycoconjugates and mediate important functions in various cellular processes, including cell adhesion, signal transduction, and cellular recognition. This Rattus norvegicus (Rat) protein is Bifunctional UDP-N-acetylglucosamine 2-epimerase/N-acetylmannosamine kinase.